We begin with the raw amino-acid sequence, 189 residues long: dCTP deaminase (189 aa).

DCTP contacts are provided by residues 112–117 (KSTYAR), 136–138 (TLE), Q157, Y171, and Q181. E138 functions as the Proton donor/acceptor in the catalytic mechanism.

Belongs to the dCTP deaminase family. In terms of assembly, homotrimer.

The catalysed reaction is dCTP + H2O + H(+) = dUTP + NH4(+). The protein operates within pyrimidine metabolism; dUMP biosynthesis; dUMP from dCTP (dUTP route): step 1/2. Functionally, catalyzes the deamination of dCTP to dUTP. This Xanthomonas axonopodis pv. citri (strain 306) protein is dCTP deaminase.